The chain runs to 350 residues: tRNA uridine(34) hydroxylase (350 aa).

Residues 146 to 240 (DDPDALFIDM…YARKAREQGL (95 aa)) enclose the Rhodanese domain. Cys200 functions as the Cysteine persulfide intermediate in the catalytic mechanism.

This sequence belongs to the TrhO family.

The catalysed reaction is uridine(34) in tRNA + AH2 + O2 = 5-hydroxyuridine(34) in tRNA + A + H2O. Its function is as follows. Catalyzes oxygen-dependent 5-hydroxyuridine (ho5U) modification at position 34 in tRNAs, the first step in 5-carboxymethoxyuridine (cmo5U) biosynthesis. May be part of an alternate pathway, which is able to bypass cmo5U biogenesis in a subset of tRNAs under aerobic conditions. This chain is tRNA uridine(34) hydroxylase, found in Escherichia coli (strain SE11).